A 207-amino-acid polypeptide reads, in one-letter code: Large ribosomal subunit protein bL25 (207 aa).

The disordered stretch occupies residues 1–20 (MANHQIKAQRRKDEGKGASR).

This sequence belongs to the bacterial ribosomal protein bL25 family. CTC subfamily. Part of the 50S ribosomal subunit; part of the 5S rRNA/L5/L18/L25 subcomplex. Contacts the 5S rRNA. Binds to the 5S rRNA independently of L5 and L18.

In terms of biological role, this is one of the proteins that binds to the 5S RNA in the ribosome where it forms part of the central protuberance. In Xylella fastidiosa (strain M23), this protein is Large ribosomal subunit protein bL25.